A 101-amino-acid chain; its full sequence is Iron-sulfur cluster assembly protein CyaY (101 aa).

This sequence belongs to the frataxin family.

In terms of biological role, involved in iron-sulfur (Fe-S) cluster assembly. May act as a regulator of Fe-S biogenesis. The protein is Iron-sulfur cluster assembly protein CyaY of Actinobacillus pleuropneumoniae serotype 5b (strain L20).